The chain runs to 188 residues: Phosphoribosylglycinamide formyltransferase (188 aa).

12 to 14 (GSN) provides a ligand contact to N(1)-(5-phospho-beta-D-ribosyl)glycinamide. Residues lysine 66, 91 to 94 (MRLI), and asparagine 108 each bind (6R)-10-formyltetrahydrofolate. Residue histidine 110 is the Proton donor of the active site.

It belongs to the GART family.

The catalysed reaction is N(1)-(5-phospho-beta-D-ribosyl)glycinamide + (6R)-10-formyltetrahydrofolate = N(2)-formyl-N(1)-(5-phospho-beta-D-ribosyl)glycinamide + (6S)-5,6,7,8-tetrahydrofolate + H(+). The protein operates within purine metabolism; IMP biosynthesis via de novo pathway; N(2)-formyl-N(1)-(5-phospho-D-ribosyl)glycinamide from N(1)-(5-phospho-D-ribosyl)glycinamide (10-formyl THF route): step 1/1. Its function is as follows. Catalyzes the transfer of a formyl group from 10-formyltetrahydrofolate to 5-phospho-ribosyl-glycinamide (GAR), producing 5-phospho-ribosyl-N-formylglycinamide (FGAR) and tetrahydrofolate. This is Phosphoribosylglycinamide formyltransferase from Staphylococcus aureus (strain COL).